The chain runs to 283 residues: Pyridoxine/pyridoxal/pyridoxamine kinase (283 aa).

Positions 23 and 59 each coordinate substrate. Asp125 contributes to the ATP binding site. Tyr136 serves as a coordination point for Mg(2+). ATP is bound by residues Thr157, Glu162, Thr195, 222–225, and Thr232; that span reads HAHV. Glu162 lines the Mg(2+) pocket. Asp234 is a binding site for substrate.

Belongs to the pyridoxine kinase family. PdxK subfamily. In terms of assembly, homodimer. Mg(2+) is required as a cofactor.

It carries out the reaction pyridoxal + ATP = pyridoxal 5'-phosphate + ADP + H(+). It catalyses the reaction pyridoxine + ATP = pyridoxine 5'-phosphate + ADP + H(+). The catalysed reaction is pyridoxamine + ATP = pyridoxamine 5'-phosphate + ADP + H(+). It participates in cofactor metabolism; pyridoxal 5'-phosphate salvage; pyridoxal 5'-phosphate from pyridoxal: step 1/1. It functions in the pathway cofactor metabolism; pyridoxal 5'-phosphate salvage; pyridoxine 5'-phosphate from pyridoxine: step 1/1. The protein operates within cofactor metabolism; pyridoxal 5'-phosphate salvage; pyridoxamine 5'-phosphate from pyridoxamine: step 1/1. In terms of biological role, B6-vitamer kinase involved in the salvage pathway of pyridoxal 5'-phosphate (PLP). Catalyzes the phosphorylation of pyridoxine (PN), pyridoxal (PL), and pyridoxamine (PM), forming their respective 5'-phosphorylated esters, i.e. PNP, PLP and PMP. This chain is Pyridoxine/pyridoxal/pyridoxamine kinase, found in Bordetella bronchiseptica (strain ATCC BAA-588 / NCTC 13252 / RB50) (Alcaligenes bronchisepticus).